A 307-amino-acid polypeptide reads, in one-letter code: Mitochondrial 2-oxodicarboxylate carrier 2 (307 aa).

The next 6 helical transmembrane spans lie at 10 to 30, 76 to 95, 122 to 142, 171 to 191, 215 to 235, and 280 to 300; these read LPFI…LTVM, SRLY…KRAT, IAAG…FELI, GLYK…GGYF, LIAG…FDVV, and CRLA…MNFF. 3 Solcar repeats span residues 10-106, 116-200, and 209-299; these read LPFI…YQKI, TTQK…VRNS, and QKTR…MMNF.

It belongs to the mitochondrial carrier (TC 2.A.29) family.

It is found in the mitochondrion inner membrane. Functionally, transports C5-C7 oxodicarboxylates across the inner membranes of mitochondria. Can transport 2-oxoadipate, 2-oxoglutarate, adipate, glutarate, 2-oxopimelate, oxaloacetate, citrate and malate. The main physiological role is probably to supply 2-oxoadipate and 2-oxoglutarate from the mitochondrial matrix to the cytosol where they are used in the biosynthesis of lysine and glutamate, respectively, and in lysine catabolism. The chain is Mitochondrial 2-oxodicarboxylate carrier 2 (ODC2) from Saccharomyces cerevisiae (strain ATCC 204508 / S288c) (Baker's yeast).